Here is a 230-residue protein sequence, read N- to C-terminus: MCGNNMSAPMPAVVPAARKATAAVIFLHGLGDTGHGWAEAFAGIKSPHIKYICPHAPVMPVTLNMNMAMPSWFDIVGLSPDSQEDESGIKQAAETVKALIDQEVKNGIPSNRIILGGFSQGGALSLYTALTTQQKLAGVTALSCWLPLRASFSQGPINSANRDISVLQCHGDCDPLVPLMFGSLTVERLKALINPANVTFKIYEGMMHSSCQQEMMDVKHFIDKLLPPID.

Residues Ser-119, Asp-174, and His-208 each act as charge relay system in the active site. Residue Lys-224 is modified to N6-acetyllysine.

Belongs to the AB hydrolase superfamily. AB hydrolase 2 family. In terms of assembly, homodimer.

It localises to the cytoplasm. It is found in the cell membrane. Its subcellular location is the nucleus membrane. The protein localises to the endoplasmic reticulum. It carries out the reaction S-hexadecanoyl-L-cysteinyl-[protein] + H2O = L-cysteinyl-[protein] + hexadecanoate + H(+). The catalysed reaction is 1-hexadecanoyl-sn-glycero-3-phosphocholine + H2O = sn-glycerol 3-phosphocholine + hexadecanoate + H(+). It catalyses the reaction a 1-(9Z-octadecenoyl)-2-acyl-sn-glycero-3-phosphocholine + H2O = a 2-acyl-sn-glycero-3-phosphocholine + (9Z)-octadecenoate + H(+). In terms of biological role, acts as an acyl-protein thioesterase. Hydrolyzes fatty acids from S-acylated cysteine residues in proteins such as trimeric G alpha proteins or HRAS. Acts as a palmitoyl thioesterase that catalyzes depalmitoylation of proteins, such as ADRB2, KCNMA1 and SQSTM1. Acts as a negative regulator of autophagy by mediating palmitoylation of SQSTM1, decreasing affinity between SQSTM1 and ATG8 proteins and recruitment of ubiquitinated cargo proteins to autophagosomes. Acts as a lysophospholipase and hydrolyzes lysophosphatidylcholine (lyso-PC). Also hydrolyzes lysophosphatidylethanolamine (lyso-PE), lysophosphatidylinositol (lyso-PI) and lysophosphatidylserine (lyso-PS). Has much higher thioesterase activity than lysophospholipase activity. Contributes to the production of lysophosphatidic acid (LPA) during blood coagulation by recognizing and cleaving plasma phospholipids to generate lysophospholipids which in turn act as substrates for ENPP2 to produce LPA. This chain is Acyl-protein thioesterase 1 (Lypla1), found in Mus musculus (Mouse).